Reading from the N-terminus, the 197-residue chain is EF-hand calcium-binding domain-containing protein 9 (197 aa).

2 residues coordinate Ca(2+): Asp-58 and Asp-69. EF-hand domains are found at residues 59–94 (LKKA…LLAH), 100–135 (GQFM…FLFN), and 136–171 (IQKQ…YTDK). Ca(2+) contacts are provided by Asp-149, Asp-153, Arg-155, and Glu-160. A compositionally biased stretch (basic and acidic residues) spans 177 to 188 (KTEEKEKGERKR). Positions 177–197 (KTEEKEKGERKRSLYSKCHIK) are disordered.

In terms of assembly, component of the CatSper complex or CatSpermasome composed of the core pore-forming members CATSPER1, CATSPER2, CATSPER3 and CATSPER4 as well as auxiliary members CATSPERB, CATSPERG, CATSPERD, CATSPERE, CATSPERZ, C2CD6/CATSPERT, TMEM249, TMEM262 and EFCAB9. HSPA1 may be an additional auxiliary complex member. The core complex members CATSPER1, CATSPER2, CATSPER3 and CATSPER4 form a heterotetrameric channel. The auxiliary CATSPERB, CATSPERG, CATSPERD and CATSPERE subunits form a pavilion-like structure over the pore which stabilizes the complex through interactions with CATSPER4, CATSPER3, CATSPER1 and CATSPER2 respectively. TMEM262/CATSPERH interacts with CATSPERB, further stabilizing the complex. C2CD6/CATSPERT interacts at least with CATSPERD and is required for targeting the CatSper complex in the flagellar membrane. Interacts with CATSPERZ; the interaction is direct, Ca(2+)-dependent and connects EFCAB9 with the CatSper complex. Dissociates from CATSPERZ at elevated pH.

Its subcellular location is the cytoplasm. The protein localises to the cell projection. The protein resides in the cilium. It localises to the flagellum. Functionally, auxiliary component of the CatSper complex, a complex involved in sperm cell hyperactivation. pH-dependent Ca(2+) sensor required to activate the CatSper channel. Sperm cell hyperactivation is needed for sperm motility which is essential late in the preparation of sperm for fertilization. Associates with the CatSper complex via direct interaction with CATSPERZ, and senses intracellular Ca(2+). Together with CATSPERZ, associates with the CatSper channel pore and is required for the two-row structure of each single CatSper channel. The chain is EF-hand calcium-binding domain-containing protein 9 from Homo sapiens (Human).